A 351-amino-acid chain; its full sequence is UDP-3-O-acylglucosamine N-acyltransferase (351 aa).

The active-site Proton acceptor is histidine 240.

This sequence belongs to the transferase hexapeptide repeat family. LpxD subfamily. As to quaternary structure, homotrimer.

The enzyme catalyses a UDP-3-O-[(3R)-3-hydroxyacyl]-alpha-D-glucosamine + a (3R)-hydroxyacyl-[ACP] = a UDP-2-N,3-O-bis[(3R)-3-hydroxyacyl]-alpha-D-glucosamine + holo-[ACP] + H(+). Its pathway is bacterial outer membrane biogenesis; LPS lipid A biosynthesis. Catalyzes the N-acylation of UDP-3-O-acylglucosamine using 3-hydroxyacyl-ACP as the acyl donor. Is involved in the biosynthesis of lipid A, a phosphorylated glycolipid that anchors the lipopolysaccharide to the outer membrane of the cell. This chain is UDP-3-O-acylglucosamine N-acyltransferase, found in Pseudomonas savastanoi pv. phaseolicola (strain 1448A / Race 6) (Pseudomonas syringae pv. phaseolicola (strain 1448A / Race 6)).